Reading from the N-terminus, the 474-residue chain is Glycogen synthase (474 aa).

An ADP-alpha-D-glucose-binding site is contributed by lysine 15.

The protein belongs to the glycosyltransferase 1 family. Bacterial/plant glycogen synthase subfamily.

It catalyses the reaction [(1-&gt;4)-alpha-D-glucosyl](n) + ADP-alpha-D-glucose = [(1-&gt;4)-alpha-D-glucosyl](n+1) + ADP + H(+). The protein operates within glycan biosynthesis; glycogen biosynthesis. Its function is as follows. Synthesizes alpha-1,4-glucan chains using ADP-glucose. The sequence is that of Glycogen synthase from Finegoldia magna (strain ATCC 29328 / DSM 20472 / WAL 2508) (Peptostreptococcus magnus).